Reading from the N-terminus, the 50-residue chain is MAVPKKKMSHSKSNSRKSNWKRKVIKKINFAVTLGKSLSFGKLSKFYLDD.

Belongs to the bacterial ribosomal protein bL32 family.

The protein localises to the plastid. In Euglena longa (Euglenophycean alga), this protein is Large ribosomal subunit protein bL32c (rpl32).